Reading from the N-terminus, the 371-residue chain is Anhydro-N-acetylmuramic acid kinase (371 aa).

Gly-9–Asp-16 is an ATP binding site.

This sequence belongs to the anhydro-N-acetylmuramic acid kinase family.

The catalysed reaction is 1,6-anhydro-N-acetyl-beta-muramate + ATP + H2O = N-acetyl-D-muramate 6-phosphate + ADP + H(+). Its pathway is amino-sugar metabolism; 1,6-anhydro-N-acetylmuramate degradation. It functions in the pathway cell wall biogenesis; peptidoglycan recycling. Functionally, catalyzes the specific phosphorylation of 1,6-anhydro-N-acetylmuramic acid (anhMurNAc) with the simultaneous cleavage of the 1,6-anhydro ring, generating MurNAc-6-P. Is required for the utilization of anhMurNAc either imported from the medium or derived from its own cell wall murein, and thus plays a role in cell wall recycling. The chain is Anhydro-N-acetylmuramic acid kinase from Caulobacter vibrioides (strain ATCC 19089 / CIP 103742 / CB 15) (Caulobacter crescentus).